Reading from the N-terminus, the 495-residue chain is Ferruginol synthase (495 aa).

M1 is a topological domain (lumenal). The helical transmembrane segment at 2–22 threads the bilayer; that stretch reads DSFPLLAALFFIAATITFLSF. The Cytoplasmic segment spans residues 23–495; that stretch reads RRRRNLPPGP…PLRIIPIVKS (473 aa). C437 contacts heme.

This sequence belongs to the cytochrome P450 family. Requires heme as cofactor. Expression is more abundant in the rhizome.

The protein localises to the endoplasmic reticulum membrane. It carries out the reaction abieta-8,11,13-triene + reduced [NADPH--hemoprotein reductase] + O2 = ferruginol + oxidized [NADPH--hemoprotein reductase] + H2O + H(+). Its function is as follows. Cytochrome P450 enzyme (CYP) which catalyzes a unique two-electron oxidation cascade on abieta-8,11,13-triene to produce ferruginol, an intermediate in tanshinone biosynthesis. The chain is Ferruginol synthase from Salvia miltiorrhiza (Chinese sage).